Reading from the N-terminus, the 188-residue chain is Photosystem I assembly protein Ycf4 (188 aa).

Helical transmembrane passes span 26 to 48 (MLWA…SSYF) and 68 to 90 (AALT…VFFL).

This sequence belongs to the Ycf4 family.

It is found in the cellular thylakoid membrane. In terms of biological role, seems to be required for the assembly of the photosystem I complex. In Picosynechococcus sp. (strain ATCC 27264 / PCC 7002 / PR-6) (Agmenellum quadruplicatum), this protein is Photosystem I assembly protein Ycf4.